The following is a 129-amino-acid chain: Basic blue protein (129 aa).

Residues 1 to 33 (MAKGRGSASWSARAIVTLMAVSVLLLQADYVQA) form the signal peptide. Positions 34–129 (ATYTVGDSGI…SDMKIAVTAV (96 aa)) constitute a Phytocyanin domain. H72, C112, H117, and M122 together coordinate Cu cation. C85 and C118 are oxidised to a cystine.

As to expression, expressed in the inflorescence and in the transmitting tract of the pistil. Detected in roots, stems, cauline leaves, cotyledons, hypocotyls, guard cells, pistils, sepals, stamen filaments and vascular bundles of roots but not of leaves. Not expressed in petals, anthers or pollen.

It is found in the secreted. The protein localises to the extracellular space. The protein resides in the extracellular matrix. In terms of biological role, forms a concentration gradient along the pollen tube growth path, with a lower level in the stigma papilla cell wall and a higher level in the transmitting tract extracellular matix of the style. This Arabidopsis thaliana (Mouse-ear cress) protein is Basic blue protein (ARPN).